The following is a 487-amino-acid chain: Gasdermin-D (487 aa).

Residue tyrosine 38 is modified to Phosphotyrosine. S-(2-succinyl)cysteine occurs at positions 39, 57, and 77. 2 beta stranded membrane passes run 92-98 (QGRVMLS) and 104-109 (KISGGA). S-(2-succinyl)cysteine is present on cysteine 122. The next 2 beta stranded transmembrane spans lie at 181–187 (GSGQFTL) and 192–198 (CLKGEGK). 2 positions are modified to S-(2-succinyl)cysteine: cysteine 192 and cysteine 265. Cysteine 192 is lipidated: S-palmitoyl cysteine. Positions 278–298 (IDEEELIEAADFQGLYAEVKA) are linker helix loop. An S-(2-succinyl)cysteine mark is found at cysteine 299, cysteine 434, and cysteine 487.

Belongs to the gasdermin family. As to quaternary structure, homooligomer; homooligomeric ring-shaped pore complex containing 27-28 subunits when inserted in the membrane. Homooligomerization is promoted by the mTORC1 complex in macrophages. In response to a canonical inflammasome stimulus, such as nigericin, recruited to NLRP3 inflammasone with similar kinetics to that of uncleaved CASP1 precursor. Although this recruitment is also observed in the absence of PYCARD, it is more efficient in its presence. In terms of processing, cleavage at Asp-276 by CASP1 (mature and uncleaved precursor forms), CASP4/CASP11 or CASP8 relieves autoinhibition and is sufficient to initiate pyroptosis. Cleavage by CASP1 and CASP4/CASP11 is not strictly dependent on the consensus cleavage site on GSDMD but depends on an exosite interface on CASP1 that recognizes and binds the Gasdermin-D, C-terminal (GSDMD-CT) part. Cleavage by CASP8 takes place following inactivation of MAP3K7/TAK1 by Yersinia toxin YopJ. Cleavage at Asp-88 by CASP3 or CASP7 inactivates the ability to mediate pyroptosis, but generates the Gasdermin-D, p13 chain, which translocates to the nucleus and acts as a transcription regulator. Cleavage by papain allergen generates the Gasdermin-D, p40 chain. Palmitoylated at Cys-192 by ZDHHC5 and ZDHHC9 in response to microbial infection and danger signals. May also be palmitoylated by ZDHHC7. Palmitoylation takes place before cleavage by caspases (CASP1, CASP4, CASP5 or CASP8) and is required for membrane translocation and pore formation. Depalmitoylated by LYPLA2. Post-translationally, succination of Cys-192 by the Krebs cycle intermediate fumarate, which leads to S-(2-succinyl)cysteine residues, inhibits processing by caspases, and ability to initiate pyroptosis. Succination modification is catalyzed by a non-enzymatic reaction caused by an accumulation of fumarate. In terms of processing, glycosylated: O-GlcNAcylation by OGT leads to reduced cleavage by CASP4 and decreased LPS-induced endothelial cell pyroptosis. Highly expressed in brain endothelial cells.

It localises to the cytoplasm. It is found in the cytosol. The protein localises to the inflammasome. The protein resides in the cell membrane. Its subcellular location is the secreted. It localises to the mitochondrion membrane. It is found in the nucleus. Its activity is regulated as follows. The full-length protein before cleavage is inactive: intramolecular interactions between N- and C-terminal domains mediate autoinhibition in the absence of activation signal. The intrinsic pyroptosis-inducing activity is carried by the released N-terminal moiety (Gasdermin-D, N-terminal) following cleavage by inflammatory caspases CASP1, CASP4/CASP11 or CASP8. Cleavage at Asp-88 by CASP3 or CASP7 inactivates the ability to mediate pyroptosis. Pore formation is specifically inhibited by VHH(GSDMD-1) nanobody, protecting against excessive pyroptosis. Inhibited by small molecule NU6300, which covalently reacts with Cys-191, thereby preventing palmitoylation and pyroptosis. Precursor of a pore-forming protein that plays a key role in host defense against pathogen infection and danger signals. This form constitutes the precursor of the pore-forming protein: upon cleavage, the released N-terminal moiety (Gasdermin-D, N-terminal) binds to membranes and forms pores, triggering pyroptosis. Functionally, promotes pyroptosis in response to microbial infection and danger signals. Produced by the cleavage of gasdermin-D by inflammatory caspases CASP1 or CASP4/CASP11 in response to canonical, as well as non-canonical (such as cytosolic LPS) inflammasome activators. After cleavage, moves to the plasma membrane where it strongly binds to inner leaflet lipids, including monophosphorylated phosphatidylinositols, such as phosphatidylinositol 4-phosphate, bisphosphorylated phosphatidylinositols, such as phosphatidylinositol (4,5)-bisphosphate, as well as phosphatidylinositol (3,4,5)-bisphosphate, and more weakly to phosphatidic acid and phosphatidylserine. Homooligomerizes within the membrane and forms pores of 10-15 nanometers (nm) of inner diameter, allowing the release of mature interleukin-1 (IL1B and IL18) and triggering pyroptosis. Gasdermin pores also allow the release of mature caspase-7 (CASP7). In some, but not all, cells types, pyroptosis is followed by pyroptotic cell death, which is caused by downstream activation of ninjurin-1 (NINJ1), which mediates membrane rupture (cytolysis). Also forms pores in the mitochondrial membrane, resulting in release of mitochondrial DNA (mtDNA) into the cytosol. Gasdermin-D, N-terminal released from pyroptotic cells into the extracellular milieu rapidly binds to and kills both Gram-negative and Gram-positive bacteria, without harming neighboring mammalian cells, as it does not disrupt the plasma membrane from the outside due to lipid-binding specificity. Under cell culture conditions, also active against intracellular bacteria, such as Listeria monocytogenes. Also active in response to MAP3K7/TAK1 inactivation by Yersinia toxin YopJ, which triggers cleavage by CASP8 and subsequent activation. Required for mucosal tissue defense against enteric pathogens. Activation of the non-canonical inflammasome in brain endothelial cells can lead to excessive pyroptosis, leading to blood-brain barrier breakdown. Strongly binds to bacterial and mitochondrial lipids, including cardiolipin. Does not bind to unphosphorylated phosphatidylinositol, phosphatidylethanolamine nor phosphatidylcholine. In terms of biological role, transcription coactivator produced by the cleavage by CASP3 or CASP7 in the upper small intestine in response to dietary antigens. Required to maintain food tolerance in small intestine: translocates to the nucleus and acts as a coactivator for STAT1 to induce the transcription of CIITA and MHC class II molecules, which in turn induce type 1 regulatory T (Tr1) cells in upper small intestine. Its function is as follows. Produced by the cleavage by papain allergen. After cleavage, moves to the plasma membrane and homooligomerizes within the membrane and forms pores of 10-15 nanometers (nm) of inner diameter, allowing the specific release of mature interleukin-33 (IL33), promoting type 2 inflammatory immune response. The protein is Gasdermin-D of Mus musculus (Mouse).